A 275-amino-acid chain; its full sequence is Diaminopimelate epimerase (275 aa).

The substrate site is built by Asn13, Gln46, and Asn65. Catalysis depends on Cys74, which acts as the Proton donor. Residues 75–76 (GN), Asn158, Asn191, and 209–210 (ER) each bind substrate. Cys218 acts as the Proton acceptor in catalysis. A substrate-binding site is contributed by 219–220 (GT).

It belongs to the diaminopimelate epimerase family. In terms of assembly, homodimer.

It localises to the cytoplasm. The enzyme catalyses (2S,6S)-2,6-diaminopimelate = meso-2,6-diaminopimelate. The protein operates within amino-acid biosynthesis; L-lysine biosynthesis via DAP pathway; DL-2,6-diaminopimelate from LL-2,6-diaminopimelate: step 1/1. Catalyzes the stereoinversion of LL-2,6-diaminopimelate (L,L-DAP) to meso-diaminopimelate (meso-DAP), a precursor of L-lysine and an essential component of the bacterial peptidoglycan. The sequence is that of Diaminopimelate epimerase from Nitrosomonas europaea (strain ATCC 19718 / CIP 103999 / KCTC 2705 / NBRC 14298).